Reading from the N-terminus, the 625-residue chain is tRNA uridine 5-carboxymethylaminomethyl modification enzyme MnmG (625 aa).

14 to 19 (GAGHAG) contributes to the FAD binding site. 273 to 287 (GPRYCPSIEDKIVRF) contacts NAD(+).

It belongs to the MnmG family. As to quaternary structure, homodimer. Heterotetramer of two MnmE and two MnmG subunits. FAD serves as cofactor.

It is found in the cytoplasm. Functionally, NAD-binding protein involved in the addition of a carboxymethylaminomethyl (cmnm) group at the wobble position (U34) of certain tRNAs, forming tRNA-cmnm(5)s(2)U34. The sequence is that of tRNA uridine 5-carboxymethylaminomethyl modification enzyme MnmG from Clostridium botulinum (strain Okra / Type B1).